A 115-amino-acid polypeptide reads, in one-letter code: Holo-[acyl-carrier-protein] synthase (115 aa).

Residues Asp-6 and Glu-51 each coordinate Mg(2+).

Belongs to the P-Pant transferase superfamily. AcpS family. The cofactor is Mg(2+).

It is found in the cytoplasm. It catalyses the reaction apo-[ACP] + CoA = holo-[ACP] + adenosine 3',5'-bisphosphate + H(+). Its function is as follows. Transfers the 4'-phosphopantetheine moiety from coenzyme A to a Ser of acyl-carrier-protein. This chain is Holo-[acyl-carrier-protein] synthase, found in Campylobacter jejuni (strain RM1221).